Consider the following 444-residue polypeptide: MTSHAPESGGLVTESTLGASNSSQTIENKGLTILGISGRRLAAVLIGWFFVIFDGYDLIVYGTVQSALAKEWNLSSATLGTIGSTAFFGMAIGAVFIGRLSDRVGRKAAVIGSVLILSVFTMLCAFAPNPWVFGAFRFIAGLGLGGLVPSVNAMTSDLVPRKTMSAWATVMMSGVPIGGSIAAVLALVVVPSSEEWGWRFMFLIALIPLVVGLPIAMKVIPSDKAIKADHDIREGHDEPAGFKDLLVDRYRWISIWFALATFVTLLAWYGLGTWLPRLMETAGYEFGHALMFTLALNLGAVIGSVVTAWAGDRFGPIRSGVIAAGIAGIALLLLLTYPPVTAVYVILILAGVGTHGTQILIIAAVANFYPSNLRGTALGWALGVGRIGAVVAPQLAGLLLAWNLGVNSNFIMFGTAALLSALALSVLLRLQKTYSVTHKVEIQG.

12 helical membrane-spanning segments follow: residues 42-64 (AAVL…YGTV), 79-101 (LGTI…GRLS), 108-127 (AAVI…CAFA), 131-153 (WVFG…SVNA), 166-188 (AWAT…LALV), 198-220 (WRFM…MKVI), 252-274 (WISI…LGTW), 289-311 (ALMF…AWAG), 318-340 (RSGV…YPPV), 344-366 (YVIL…AAVA), 378-400 (LGWA…GLLL), and 410-428 (FIMF…SVLL).

The protein belongs to the major facilitator superfamily. Aromatic acid:H(+) symporter (AAHS) (TC 2.A.1.15) family.

It localises to the cell membrane. Transport of gentisate (2,5-dihydroxybenzoate) into the cell. Does not transport 3-hydroxybenzoate or benzoate. In Corynebacterium glutamicum (strain ATCC 13032 / DSM 20300 / JCM 1318 / BCRC 11384 / CCUG 27702 / LMG 3730 / NBRC 12168 / NCIMB 10025 / NRRL B-2784 / 534), this protein is Gentisate transporter (genK).